Here is an 85-residue protein sequence, read N- to C-terminus: U4-theraphotoxin-Hhn1w (85 aa).

The N-terminal stretch at 1 to 22 is a signal peptide; it reads MKVTLIAILTCAAVLALHTTAA. Residues 23 to 48 constitute a propeptide that is removed on maturation; it reads EELEAESQLMEVGMPDTELAAVDEER. Cystine bridges form between cysteine 52–cysteine 66, cysteine 56–cysteine 77, and cysteine 71–cysteine 82.

The protein belongs to the neurotoxin 12 (Hwtx-2) family. 02 (Hwtx-2) subfamily. In terms of tissue distribution, expressed by the venom gland.

The protein resides in the secreted. Postsynaptic neurotoxin. The chain is U4-theraphotoxin-Hhn1w from Cyriopagopus hainanus (Chinese bird spider).